Here is a 382-residue protein sequence, read N- to C-terminus: MAKKDYYEVLGLQKGASEDEIKRAYKRLASKHHPDKNQGSKEAEEKFKEINEAYEVLGDDQKRAAYDQYGHAAFEQGGGAGGFGGGFGGADFGDMFGDIFGDIFGGGGRGRQRVVRGEDLRYDLEISLEEAVKGTTKDIQINTLAHCDSCGGSGAEKGSKVETCPHCHGSGRIRRQQGFFVSESICPTCHGSGKKIEKPCRNCHGEGRVHKKENLSVKIPAGVDTGNQLRLAGKGAAGENGAPAGDLYVVIHVREHNIFERDGSNLYCEVPISFATAALGGEIEVPTLDGRVKLKIPAETQTGKLFRMRGKGVASTRSGYAGDLICRIVVETPVNLTSEQKELLHKLEESLQGKDLSKHAPKSSGFLDGVKKFFDNLGKSDK.

Positions 5–70 (DYYEVLGLQK…QKRAAYDQYG (66 aa)) constitute a J domain. Residues 134-212 (GTTKDIQINT…CHGEGRVHKK (79 aa)) form a CR-type zinc finger. The Zn(2+) site is built by cysteine 147, cysteine 150, cysteine 164, cysteine 167, cysteine 186, cysteine 189, cysteine 200, and cysteine 203. CXXCXGXG motif repeat units follow at residues 147–154 (CDSCGGSG), 164–171 (CPHCHGSG), 186–193 (CPTCHGSG), and 200–207 (CRNCHGEG).

The protein belongs to the DnaJ family. Homodimer. Requires Zn(2+) as cofactor.

It localises to the cytoplasm. Participates actively in the response to hyperosmotic and heat shock by preventing the aggregation of stress-denatured proteins and by disaggregating proteins, also in an autonomous, DnaK-independent fashion. Unfolded proteins bind initially to DnaJ; upon interaction with the DnaJ-bound protein, DnaK hydrolyzes its bound ATP, resulting in the formation of a stable complex. GrpE releases ADP from DnaK; ATP binding to DnaK triggers the release of the substrate protein, thus completing the reaction cycle. Several rounds of ATP-dependent interactions between DnaJ, DnaK and GrpE are required for fully efficient folding. Also involved, together with DnaK and GrpE, in the DNA replication of plasmids through activation of initiation proteins. This chain is Chaperone protein DnaJ, found in Haemophilus influenzae (strain ATCC 51907 / DSM 11121 / KW20 / Rd).